Reading from the N-terminus, the 386-residue chain is 3-ketoacyl-CoA thiolase (386 aa).

Catalysis depends on cysteine 91, which acts as the Acyl-thioester intermediate. Residues histidine 342 and cysteine 372 each act as proton acceptor in the active site.

This sequence belongs to the thiolase-like superfamily. Thiolase family. As to quaternary structure, heterotetramer of two alpha chains (FadB) and two beta chains (FadA).

The protein localises to the cytoplasm. It catalyses the reaction an acyl-CoA + acetyl-CoA = a 3-oxoacyl-CoA + CoA. The protein operates within lipid metabolism; fatty acid beta-oxidation. In terms of biological role, catalyzes the final step of fatty acid oxidation in which acetyl-CoA is released and the CoA ester of a fatty acid two carbons shorter is formed. The protein is 3-ketoacyl-CoA thiolase of Colwellia psychrerythraea (strain 34H / ATCC BAA-681) (Vibrio psychroerythus).